The sequence spans 197 residues: Small ribosomal subunit protein uS4c (197 aa).

The S4 RNA-binding domain maps to 85 to 157; the sequence is MRLDNILFRL…LQLFTGKELA (73 aa).

This sequence belongs to the universal ribosomal protein uS4 family. In terms of assembly, part of the 30S ribosomal subunit. Contacts protein S5. The interaction surface between S4 and S5 is involved in control of translational fidelity.

The protein resides in the plastid. Its function is as follows. One of the primary rRNA binding proteins, it binds directly to 16S rRNA where it nucleates assembly of the body of the 30S subunit. Functionally, with S5 and S12 plays an important role in translational accuracy. The chain is Small ribosomal subunit protein uS4c (rps4) from Cuscuta gronovii (Common dodder).